Here is an 88-residue protein sequence, read N- to C-terminus: uncharacterized protein (88 aa).

This is an uncharacterized protein from Gracula (BFDV).